A 60-amino-acid polypeptide reads, in one-letter code: Potassium channel toxin alpha-KTx 29.1 (60 aa).

An N-terminal signal peptide occupies residues 1–28; it reads MKSVCGVLIILVVLTTMLSISTFSTVGA. 3 cysteine pairs are disulfide-bonded: Cys-32/Cys-51, Cys-40/Cys-56, and Cys-44/Cys-58.

This sequence belongs to the short scorpion toxin superfamily. Potassium channel inhibitor family. Alpha-KTx 29 subfamily. Expressed by the venom gland.

The protein resides in the secreted. Its function is as follows. Weakly inhibits the Kv1.3/KCNA3 channel (1 uM of the toxin inhibits currents by 13.2%) and Kv7.1/KCNQ1 channel (10 uM of the toxin inhibits currents by 27.7%). In Lychas mucronatus (Chinese swimming scorpion), this protein is Potassium channel toxin alpha-KTx 29.1.